The chain runs to 413 residues: THAP domain-containing protein 5 (413 aa).

The segment at 1–85 (MPRYCAASYC…LKHTAVPTIF (85 aa)) adopts a THAP-type zinc-finger fold. Residues 84-118 (IFSSPDDEEKGSSQNSPQEIRREDQEETTKNVESK) form a disordered region. The span at 102–118 (EIRREDQEETTKNVESK) shows a compositional bias: basic and acidic residues. A coiled-coil region spans residues 375–399 (RLRSLEALIGQLKQENLLSEEKLKI).

It localises to the nucleus. The chain is THAP domain-containing protein 5 (THAP5) from Gallus gallus (Chicken).